Reading from the N-terminus, the 1720-residue chain is DNA-directed RNA polymerase I subunit RPA1 (1720 aa).

Residues cysteine 64, cysteine 67, cysteine 74, histidine 77, cysteine 104, and cysteine 107 each contribute to the Zn(2+) site. The clamp stretch occupies residues 110–201 (LTCPRAVIHL…IALFWKAHMN (92 aa)). 2 residues coordinate Zn(2+): cysteine 205 and cysteine 208. Serine 240 is subject to Phosphoserine. Residues 320-426 (FTNGQTVNLQ…IRQILEKKEG (107 aa)) are clamp. Residues 403-416 (DSEMDKLMMDKYPG) form a rudder region. DNA is bound by residues lysine 424, arginine 429, and arginine 436. The interval 468-542 (YPQPVTPWNV…QGTKIVCRHV (75 aa)) is involved in RRN3 binding to Pol I complex. Position 552 (arginine 552) interacts with RNA. Mg(2+)-binding residues include aspartate 588, aspartate 590, and aspartate 592. Aspartate 592 is an RNA binding site. The segment at 805 to 883 (KPKADVKRQR…NEINKACMPF (79 aa)) is funnel. The segment at 960–1001 (KPPEFFFHCMAGREGLVDTAVKTSRSGYLQRCIIKHLEGLVV) is bridging helix. A mediates the interaction with TOP2A region spans residues 1060 to 1155 (ADPKKALHHF…SLSVWRPDIY (96 aa)). The tract at residues 1207–1248 (PGEAVGLLAAQSIGEPSTQMTLNTFHFAGRGEMNVTLGIPRL) is trigger loop. Arginine 1249 is a binding site for DNA. Residues 1365–1498 (RNVNTRRATQ…SQEPQGPEAM (134 aa)) form a disordered region. Over residues 1373–1390 (TQRDLDNAGELGRSRGEQ) the composition is skewed to basic and acidic residues. Serine 1386 is modified (phosphoserine). Composition is skewed to acidic residues over residues 1391–1412 (EGDE…DADA) and 1422–1446 (EEEV…EDMQ). Positions 1447–1461 (EERNPHREGARKTQE) are enriched in basic and acidic residues. Residues 1462 to 1474 (QDEEVGLGTEEDP) are compositionally biased toward acidic residues.

This sequence belongs to the RNA polymerase beta' chain family. In terms of assembly, component of the RNA polymerase I (Pol I) complex consisting of 13 subunits: a ten-subunit catalytic core composed of POLR1A/RPA1, POLR1B/RPA2, POLR1C/RPAC1, POLR1D/RPAC2, POLR1H/RPA12, POLR2E/RPABC1, POLR2F/RPABC2, POLR2H/RPABC3, POLR2K/RPABC4 and POLR2L/RPABC5; a mobile stalk subunit POLR1F/RPA43 protruding from the core and additional subunits homologous to general transcription factors POLR1E/RPA49 and POLR1G/RPA34. Part of Pol I pre-initiation complex (PIC), in which Pol I core assembles with RRN3 and promoter-bound UTBF and SL1/TIF-IB complex. Interacts (via dock II domain) with TOP2A; this interaction may assist Pol I transcription initiation by releasing supercoils occurring during DNA unwinding. Interacts with CAVIN1; this interaction induces the dissociation of Pol I complex paused at rDNA terminator sequences. Interacts with MYO1C. Interacts with ERBB2. Interacts with DDX11. Interacts with RECQL5. Mg(2+) serves as cofactor.

The protein resides in the nucleus. Its subcellular location is the nucleolus. It localises to the chromosome. It catalyses the reaction RNA(n) + a ribonucleoside 5'-triphosphate = RNA(n+1) + diphosphate. Its function is as follows. Catalytic core component of RNA polymerase I (Pol I), a DNA-dependent RNA polymerase which synthesizes ribosomal RNA precursors using the four ribonucleoside triphosphates as substrates. Transcribes 47S pre-rRNAs from multicopy rRNA gene clusters, giving rise to 5.8S, 18S and 28S ribosomal RNAs. Pol I-mediated transcription cycle proceeds through transcription initiation, transcription elongation and transcription termination stages. During transcription initiation, Pol I pre-initiation complex (PIC) is recruited by the selectivity factor 1 (SL1/TIF-IB) complex bound to the core promoter that precedes an rDNA repeat unit. The PIC assembly bends the promoter favoring the formation of the transcription bubble and promoter escape. Once the polymerase has escaped from the promoter it enters the elongation phase during which RNA is actively polymerized, based on complementarity with the template DNA strand. Highly processive, assembles in structures referred to as 'Miller trees' where many elongating Pol I complexes queue and transcribe the same rDNA coding regions. At terminator sequences downstream of the rDNA gene, PTRF interacts with Pol I and halts Pol I transcription leading to the release of the RNA transcript and polymerase from the DNA. Forms Pol I active center together with the second largest subunit POLR1B/RPA2. Appends one nucleotide at a time to the 3' end of the nascent RNA, with POLR1A/RPA1 contributing a Mg(2+)-coordinating DxDGD motif, and POLR1B/RPA2 participating in the coordination of a second Mg(2+) ion and providing lysine residues believed to facilitate Watson-Crick base pairing between the incoming nucleotide and the template base. Typically, Mg(2+) ions direct a 5' nucleoside triphosphate to form a phosphodiester bond with the 3' hydroxyl of the preceding nucleotide of the nascent RNA, with the elimination of pyrophosphate. Has proofreading activity: Pauses and backtracks to allow the cleavage of a missincorporated nucleotide via POLR1H/RPA12. High Pol I processivity is associated with decreased transcription fidelity. The polypeptide is DNA-directed RNA polymerase I subunit RPA1 (Homo sapiens (Human)).